We begin with the raw amino-acid sequence, 310 residues long: Ribosomal RNA small subunit methyltransferase H (310 aa).

Residues 40–42 (GGH), Asp59, Phe89, Asp104, and Gln111 each bind S-adenosyl-L-methionine.

It belongs to the methyltransferase superfamily. RsmH family.

It is found in the cytoplasm. The catalysed reaction is cytidine(1402) in 16S rRNA + S-adenosyl-L-methionine = N(4)-methylcytidine(1402) in 16S rRNA + S-adenosyl-L-homocysteine + H(+). Functionally, specifically methylates the N4 position of cytidine in position 1402 (C1402) of 16S rRNA. This chain is Ribosomal RNA small subunit methyltransferase H, found in Amoebophilus asiaticus (strain 5a2).